Consider the following 146-residue polypeptide: Probable glycine cleavage system H protein 3 (146 aa).

Positions 29–111 (VVSVGMTDLG…PYGSWIIKVS (83 aa)) constitute a Lipoyl-binding domain. Residue lysine 71 is modified to N6-lipoyllysine.

It belongs to the GcvH family. As to quaternary structure, the glycine cleavage system is composed of four proteins: P, T, L and H. (R)-lipoate is required as a cofactor.

The glycine cleavage system catalyzes the degradation of glycine. The H protein shuttles the methylamine group of glycine from the P protein to the T protein. The sequence is that of Probable glycine cleavage system H protein 3 from Sulfolobus acidocaldarius (strain ATCC 33909 / DSM 639 / JCM 8929 / NBRC 15157 / NCIMB 11770).